A 262-amino-acid polypeptide reads, in one-letter code: Acyl-[acyl-carrier-protein]--UDP-N-acetylglucosamine O-acyltransferase (262 aa).

The protein belongs to the transferase hexapeptide repeat family. LpxA subfamily. As to quaternary structure, homotrimer.

It is found in the cytoplasm. The enzyme catalyses a (3R)-hydroxyacyl-[ACP] + UDP-N-acetyl-alpha-D-glucosamine = a UDP-3-O-[(3R)-3-hydroxyacyl]-N-acetyl-alpha-D-glucosamine + holo-[ACP]. Its pathway is glycolipid biosynthesis; lipid IV(A) biosynthesis; lipid IV(A) from (3R)-3-hydroxytetradecanoyl-[acyl-carrier-protein] and UDP-N-acetyl-alpha-D-glucosamine: step 1/6. Its function is as follows. Involved in the biosynthesis of lipid A, a phosphorylated glycolipid that anchors the lipopolysaccharide to the outer membrane of the cell. The chain is Acyl-[acyl-carrier-protein]--UDP-N-acetylglucosamine O-acyltransferase from Pectobacterium carotovorum subsp. carotovorum (strain PC1).